The following is a 167-amino-acid chain: Ribosome-binding factor A (167 aa).

A disordered region spans residues 127–167; that stretch reads SRANAQYAGDADPYKHDEPDDDDFDDDDDVEVEDWDDDDEA. A compositionally biased stretch (acidic residues) spans 145–167; it reads PDDDDFDDDDDVEVEDWDDDDEA.

Belongs to the RbfA family. Monomer. Binds 30S ribosomal subunits, but not 50S ribosomal subunits or 70S ribosomes.

It localises to the cytoplasm. Its function is as follows. One of several proteins that assist in the late maturation steps of the functional core of the 30S ribosomal subunit. Associates with free 30S ribosomal subunits (but not with 30S subunits that are part of 70S ribosomes or polysomes). Required for efficient processing of 16S rRNA. May interact with the 5'-terminal helix region of 16S rRNA. The chain is Ribosome-binding factor A from Bifidobacterium adolescentis (strain ATCC 15703 / DSM 20083 / NCTC 11814 / E194a).